We begin with the raw amino-acid sequence, 292 residues long: Pyridoxal 5'-phosphate synthase subunit PdxS (292 aa).

Asp-22 provides a ligand contact to D-ribose 5-phosphate. Residue Lys-79 is the Schiff-base intermediate with D-ribose 5-phosphate of the active site. A D-ribose 5-phosphate-binding site is contributed by Gly-151. Arg-163 serves as a coordination point for D-glyceraldehyde 3-phosphate. D-ribose 5-phosphate contacts are provided by residues Gly-212 and 233–234 (GS).

Belongs to the PdxS/SNZ family. In the presence of PdxT, forms a dodecamer of heterodimers.

The catalysed reaction is aldehydo-D-ribose 5-phosphate + D-glyceraldehyde 3-phosphate + L-glutamine = pyridoxal 5'-phosphate + L-glutamate + phosphate + 3 H2O + H(+). Its pathway is cofactor biosynthesis; pyridoxal 5'-phosphate biosynthesis. Functionally, catalyzes the formation of pyridoxal 5'-phosphate from ribose 5-phosphate (RBP), glyceraldehyde 3-phosphate (G3P) and ammonia. The ammonia is provided by the PdxT subunit. Can also use ribulose 5-phosphate and dihydroxyacetone phosphate as substrates, resulting from enzyme-catalyzed isomerization of RBP and G3P, respectively. This Ruminiclostridium cellulolyticum (strain ATCC 35319 / DSM 5812 / JCM 6584 / H10) (Clostridium cellulolyticum) protein is Pyridoxal 5'-phosphate synthase subunit PdxS.